Here is an 88-residue protein sequence, read N- to C-terminus: Small ribosomal subunit protein bS16 (88 aa).

Belongs to the bacterial ribosomal protein bS16 family.

The polypeptide is Small ribosomal subunit protein bS16 (Syntrophomonas wolfei subsp. wolfei (strain DSM 2245B / Goettingen)).